A 277-amino-acid chain; its full sequence is Large ribosomal subunit protein uL2 (277 aa).

Disordered stretches follow at residues 37–59 (KNSTGGRNHNGHITTRHRGGGHK) and 221–265 (RGTA…KRTD). Residues 50–59 (TTRHRGGGHK) show a composition bias toward basic residues. Residues 229-241 (DHPHGGGEGRTGE) are compositionally biased toward basic and acidic residues.

This sequence belongs to the universal ribosomal protein uL2 family. Part of the 50S ribosomal subunit. Forms a bridge to the 30S subunit in the 70S ribosome.

Functionally, one of the primary rRNA binding proteins. Required for association of the 30S and 50S subunits to form the 70S ribosome, for tRNA binding and peptide bond formation. It has been suggested to have peptidyltransferase activity; this is somewhat controversial. Makes several contacts with the 16S rRNA in the 70S ribosome. This is Large ribosomal subunit protein uL2 from Chromobacterium violaceum (strain ATCC 12472 / DSM 30191 / JCM 1249 / CCUG 213 / NBRC 12614 / NCIMB 9131 / NCTC 9757 / MK).